Reading from the N-terminus, the 100-residue chain is Large ribosomal subunit protein bL21 (100 aa).

Belongs to the bacterial ribosomal protein bL21 family. As to quaternary structure, part of the 50S ribosomal subunit. Contacts protein L20.

Functionally, this protein binds to 23S rRNA in the presence of protein L20. This Corynebacterium jeikeium (strain K411) protein is Large ribosomal subunit protein bL21.